Consider the following 863-residue polypeptide: MFRNNNNDNNNNDNGFDDENKGIFLDSKIEISDETSLIHKPYHDDYDENGLINNNNNSHNNNNGGNNNNHGPSKVTHRRGKHTFTEADKLKMTKFESLDFPIIDNQIYREYIRRTSKLNHMLKTFGKWIICFMIGVLVGITAYLVKQSVEFVNEFKFDQSGKYLEDERKFIAFLVYYSINILFGVSASLVIIPVGQIASGSGIPEVKGYLNGIRIPQSMNVKTLVGKLVSLILAYSSGLILGPEGPMIHIGSMLGGAIGQVKSKTLKWYPKVLWKYHNDRDRRDFISTGAAAGVAAAFGAPIGGVLFGFEEASSFWSRQLTWRTFFACLIATFTTNIILQGFDMQLHDYGVLKFGLSNKYLYKYSELIPFALIGVAGGLFGALFVNLNAHLSQWRSKFFANKKIYLRVLEVFILITITSTILYCCAAFTPCRSKTQANGSQTNSLDTSSSSILSSSGDNSKNSTKLFKLLNNASGEDKQEDKFIAFFCEQGEYNQMAGLSFNSLDAALRLLFSTSTDIFTIPTLAVFSLISFILTTITSGLMLASGLFIPMMLVGATFGRLVGQVIALFVSVDPCIYALVGASAMMAGFSRMTISLAIIMVELTEGTQYMLPVILSVMIAKWVGDFFNESIYEHLIEQKCYPFLQSQPPKSMIKLGVVDIMKTEVVTLHEVERVSKVIEVLKSEQHFHNGFPVIERPRPLDPNRKDAYGNLEYYEDETTYSGLILRNQLICLLYYRIFCHEQPLPQNPRLLGGNSNRRYNQRRFGRPTEYGYAPADPRMTYELMTQSLARHFPPIDKMNLKKEEIETMYIDLRPYMNLSTIVANETYSYSETYSIFRTIGLRHLPVVNKKNEVVGIVTRKDLL.

Residues 1 to 124 (MFRNNNNDNN…TSKLNHMLKT (124 aa)) lie on the Cytoplasmic side of the membrane. Positions 48-78 (ENGLINNNNNSHNNNNGGNNNNHGPSKVTHR) are disordered. A compositionally biased stretch (low complexity) spans 49-71 (NGLINNNNNSHNNNNGGNNNNHG). Helical transmembrane passes span 125–145 (FGKW…AYLV), 171–191 (IAFL…SLVI), 228–248 (LVSL…GPMI), 289–309 (GAAA…LFGF), 324–344 (TFFA…GFDM), 367–387 (LIPF…FVNL), and 408–428 (VLEV…CAAF). The tract at residues 434–460 (KTQANGSQTNSLDTSSSSILSSSGDNS) is disordered. Residues 439–460 (GSQTNSLDTSSSSILSSSGDNS) show a composition bias toward low complexity. Transmembrane regions (helical) follow at residues 518–538 (IFTI…TTIT), 539–559 (SGLM…ATFG), and 561–581 (LVGQ…ALVG). CBS domains are found at residues 661–742 (MKTE…CHEQ) and 816–863 (MNLS…KDLL).

This sequence belongs to the chloride channel (TC 2.A.49) family.

It localises to the membrane. Functionally, voltage-gated chloride channel. Chloride channels may have several functions including the regulation of cell volume, membrane potential stabilization and signal transduction. The chain is Chloride channel protein A (clcA) from Dictyostelium discoideum (Social amoeba).